Here is a 225-residue protein sequence, read N- to C-terminus: UPF0758 protein SZO_09140 (225 aa).

The region spanning 102-224 is the MPN domain; the sequence is PVLSSAQVAE…YYSFREKSDL (123 aa). The Zn(2+) site is built by histidine 173, histidine 175, and aspartate 186. Residues 173–186 carry the JAMM motif motif; that stretch reads HNHPSGLTKPSAND.

The protein belongs to the UPF0758 family.

The sequence is that of UPF0758 protein SZO_09140 from Streptococcus equi subsp. zooepidemicus (strain H70).